We begin with the raw amino-acid sequence, 303 residues long: Probable RuBisCO transcriptional regulator (303 aa).

The 58-residue stretch at 6-63 (FTLDQLRIFQAIVVEGSFQKAAQSLYISQPAVSLQIQNLEQQLNAPLFDRSHRKAKLT) folds into the HTH lysR-type domain. Positions 23 to 42 (FQKAAQSLYISQPAVSLQIQ) form a DNA-binding region, H-T-H motif.

Belongs to the LysR transcriptional regulatory family.

Its subcellular location is the plastid. The protein localises to the chloroplast. Functionally, trans-acting transcriptional regulator of RuBisCO genes (rbcL and rbcS) expression. In Cyanidioschyzon merolae (strain NIES-3377 / 10D) (Unicellular red alga), this protein is Probable RuBisCO transcriptional regulator (rbcR).